Here is a 611-residue protein sequence, read N- to C-terminus: Developmental and secondary metabolism regulator veA (611 aa).

3 disordered regions span residues 1–57 (MNRK…RPVD), 222–497 (RRRE…ASFD), and 511–611 (LEAS…PGHA). Polar residues predominate over residues 14–23 (KSSATRTTND). Residues 24–216 (GRAITYEMQV…AEQGCRVRIR (193 aa)) form the Velvet domain. Residues 38–43 (QRARAC) carry the Nuclear localization signal motif. Over residues 242 to 254 (AARARASATPDPS) the composition is skewed to low complexity. The segment covering 274–290 (SASNASHQSLGSISRRP) has biased composition (polar residues). The segment covering 330-340 (YPPNQFVQQQP) has biased composition (low complexity). Pro residues predominate over residues 341 to 361 (PMQPPLPQYQPPNYPAPPPPV). Positions 362-377 (TAAQQPQPAQSYYNYP) are enriched in low complexity. Residues 419-434 (RNSQQIPPTSQPTAYT) are compositionally biased toward polar residues. Composition is skewed to low complexity over residues 435-452 (QPMQ…QHYQ) and 461-471 (QASQHSSYSSM). The interval 455-499 (PPPPPSQASQHSSYSSMDLYNSRPAPIEPHHHGNTPASKASFDLP) is PEST. Over residues 511 to 533 (LEASSPTSVAPTNAYFSGGQTPI) the composition is skewed to polar residues.

The protein belongs to the velvet family. VeA subfamily. As to quaternary structure, component of the heterotrimeric velvet complex composed of laeA, veA and velB; VeA acting as a bridging protein between laeA and velB.

Its subcellular location is the nucleus. The protein resides in the cytoplasm. In terms of biological role, component of the velvet transcription factor complex that controls sexual/asexual developmental ratio in response to light, promoting sexual development in the darkness while stimulating asexual sporulation under illumination. The velvet complex hat acts as a global regulator for secondary metabolite gene expression. Controls the expression of the dothistromin gene cluster. Regulates hyphal growth and pigment formation. Acts as a positive regulator of virulence. This chain is Developmental and secondary metabolism regulator veA, found in Dothistroma septosporum (strain NZE10 / CBS 128990) (Red band needle blight fungus).